The following is a 93-amino-acid chain: Small ribosomal subunit protein uS19 (93 aa).

This sequence belongs to the universal ribosomal protein uS19 family.

In terms of biological role, protein S19 forms a complex with S13 that binds strongly to the 16S ribosomal RNA. The sequence is that of Small ribosomal subunit protein uS19 from Frankia casuarinae (strain DSM 45818 / CECT 9043 / HFP020203 / CcI3).